The sequence spans 360 residues: sn-glycerol-3-phosphate import ATP-binding protein UgpC (360 aa).

An ABC transporter domain is found at 4 to 235 (LSLKGVRKSY…PATTFVASFI (232 aa)). Residue 37 to 44 (GPSGCGKS) participates in ATP binding.

Belongs to the ABC transporter superfamily. sn-glycerol-3-phosphate importer (TC 3.A.1.1.3) family. The complex is composed of two ATP-binding proteins (UgpC), two transmembrane proteins (UgpA and UgpE) and a solute-binding protein (UgpB).

It localises to the cell inner membrane. It catalyses the reaction sn-glycerol 3-phosphate(out) + ATP + H2O = sn-glycerol 3-phosphate(in) + ADP + phosphate + H(+). Functionally, part of the ABC transporter complex UgpBAEC involved in sn-glycerol-3-phosphate (G3P) import. Responsible for energy coupling to the transport system. This is sn-glycerol-3-phosphate import ATP-binding protein UgpC from Burkholderia pseudomallei (strain K96243).